The chain runs to 421 residues: Adenylosuccinate synthetase (421 aa).

GTP-binding positions include 11–17 (GDEGKGK) and 39–41 (GHT). Residue Asp12 is the Proton acceptor of the active site. Mg(2+)-binding residues include Asp12 and Gly39. IMP-binding positions include 12 to 15 (DEGK), 37 to 40 (NAGH), Thr129, Arg143, Asn219, Thr234, and Arg298. His40 serves as the catalytic Proton donor. 294 to 300 (VTTGRRR) serves as a coordination point for substrate. GTP-binding positions include Arg300, 326–328 (KLD), and 409–411 (GTG).

Belongs to the adenylosuccinate synthetase family. In terms of assembly, homodimer. Mg(2+) is required as a cofactor.

It is found in the cytoplasm. The catalysed reaction is IMP + L-aspartate + GTP = N(6)-(1,2-dicarboxyethyl)-AMP + GDP + phosphate + 2 H(+). Its pathway is purine metabolism; AMP biosynthesis via de novo pathway; AMP from IMP: step 1/2. Plays an important role in the de novo pathway and in the salvage pathway of purine nucleotide biosynthesis. Catalyzes the first committed step in the biosynthesis of AMP from IMP. The protein is Adenylosuccinate synthetase of Paracoccidioides brasiliensis (strain Pb03).